A 146-amino-acid chain; its full sequence is 3-hydroxyacyl-[acyl-carrier-protein] dehydratase FabZ (146 aa).

Residue H48 is part of the active site.

This sequence belongs to the thioester dehydratase family. FabZ subfamily.

Its subcellular location is the cytoplasm. The catalysed reaction is a (3R)-hydroxyacyl-[ACP] = a (2E)-enoyl-[ACP] + H2O. Functionally, involved in unsaturated fatty acids biosynthesis. Catalyzes the dehydration of short chain beta-hydroxyacyl-ACPs and long chain saturated and unsaturated beta-hydroxyacyl-ACPs. In Paracidovorax citrulli (strain AAC00-1) (Acidovorax citrulli), this protein is 3-hydroxyacyl-[acyl-carrier-protein] dehydratase FabZ.